We begin with the raw amino-acid sequence, 141 residues long: uncharacterized protein (141 aa).

The protein belongs to the mimivirus L163/R849 family.

This is an uncharacterized protein from Acanthamoeba polyphaga mimivirus (APMV).